The primary structure comprises 702 residues: p-hydroxybenzoic acid--AMP ligase FadD22 (702 aa).

The Carrier domain occupies 538 to 616; that stretch reads ERHRLVLDAV…GLAQYLEAEL (79 aa). Ser576 carries the O-(pantetheine 4'-phosphoryl)serine modification.

Belongs to the ATP-dependent AMP-binding enzyme family.

It carries out the reaction holo-[4-hydroxyphenylalkanoate synthase] + 4-hydroxybenzoate + ATP = 4-hydroxyphenyl-[4-hydroxyphenylalkanoate synthase] + AMP + diphosphate. Its pathway is lipid metabolism; fatty acid biosynthesis. Its function is as follows. Catalyzes the adenylation of p-hydroxybenzoic acid (pHBA) to form p-hydroxybenzoic acid-AMP (pHBA-AMP), which is converted directly to p-hydroxybenzoyl-S-FadD22 (pHBA-S-FAdD22) thioester intermediate in a CoA-independent manner by attack of the phosphopantetheine thiol of FadD22. This intermediate primes the biosynthesis of the phenolphthiocerol (PPOL) by presenting the pHBA starter unit for elongation by Pks15/1. PPOL is an important intermediate in the biosynthesis of phenolic glycolipid (mycosid B). The protein is p-hydroxybenzoic acid--AMP ligase FadD22 (fadD22) of Mycobacterium marinum (strain ATCC BAA-535 / M).